Here is a 500-residue protein sequence, read N- to C-terminus: L-arabinose isomerase (500 aa).

Mn(2+)-binding residues include Glu-306, Glu-333, His-349, and His-448.

The protein belongs to the arabinose isomerase family. Mn(2+) serves as cofactor.

The catalysed reaction is beta-L-arabinopyranose = L-ribulose. Its pathway is carbohydrate degradation; L-arabinose degradation via L-ribulose; D-xylulose 5-phosphate from L-arabinose (bacterial route): step 1/3. Its function is as follows. Catalyzes the conversion of L-arabinose to L-ribulose. The chain is L-arabinose isomerase from Saccharophagus degradans (strain 2-40 / ATCC 43961 / DSM 17024).